A 204-amino-acid polypeptide reads, in one-letter code: Guanine-specific ADP-ribosyl transferase (204 aa).

Residues Met-1–Ala-42 form the signal peptide. Cys-46 and Cys-76 are oxidised to a cystine. NADH is bound by residues Arg-81–Arg-85 and Lys-98. GDP contacts are provided by residues Val-111–Asn-114, Trp-132–Lys-134, Trp-159, and Gln-162. Positions Trp-132–Gly-136 match the PN (phosphate-nicotinamide) loop motif. A disulfide bridge links Cys-180 with Cys-194.

It belongs to the pierisin ADP-ribosyltransferase family. In terms of assembly, monomer.

The protein resides in the secreted. The catalysed reaction is guanosine + NAD(+) = N(2)-(ADP-D-ribosyl)-guanosine + nicotinamide + H(+). It carries out the reaction a 2'-deoxyguanosine in DNA + NAD(+) = an N(2)-(ADP-L-ribosyl)-2'-deoxyguanosine in DNA + nicotinamide + H(+). It catalyses the reaction 2'-deoxyguanosine + NAD(+) = N(2)-(ADP-D-ribosyl)-2'-deoxyguanosine + nicotinamide + H(+). The enzyme catalyses GMP + NAD(+) = N(2)-(ADP-D-ribosyl)-GMP + nicotinamide + H(+). The catalysed reaction is GTP + NAD(+) = N(2)-(ADP-D-ribosyl)-GTP + nicotinamide + H(+). It carries out the reaction dGMP + NAD(+) = N(2)-(ADP-D-ribosyl)-dGMP + nicotinamide + H(+). It catalyses the reaction dGTP + NAD(+) = N(2)-(ADP-D-ribosyl)-dGTP + nicotinamide + H(+). The enzyme catalyses 3',5'-cyclic GMP + NAD(+) = N(2)-(ADP-D-ribosyl)-3',5'-cyclic GMP + nicotinamide + H(+). The catalysed reaction is guanine + NAD(+) = N(2)-(ADP-D-ribosyl)-guanine + nicotinamide + H(+). It carries out the reaction GDP + NAD(+) = N(2)-(ADP-D-ribosyl)-GDP + nicotinamide + H(+). Its activity is regulated as follows. Inhibited by NADH. ADP-ribosylates the N2 amino group of guanosine, deoxyguanosine, GMP, dGMP, cGMP, GTP and dGTP; oligo-guanosine, oligo-deoxyguanosine and tRNA are ADP-ribosylated less efficiently, while dsDNA is a very poor substrate. Also acts on GDP. The polypeptide is Guanine-specific ADP-ribosyl transferase (Streptomyces coelicolor (strain ATCC BAA-471 / A3(2) / M145)).